Here is a 293-residue protein sequence, read N- to C-terminus: Eukaryotic translation initiation factor 3 subunit F (293 aa).

Ala2 carries the N-acetylalanine modification. Residues 28-159 form the MPN domain; it reads ARIHPLVIFN…IKAFVSSNLS (132 aa).

The protein belongs to the eIF-3 subunit F family. As to quaternary structure, component of the eukaryotic translation initiation factor 3 (eIF-3) complex. Binds to TIF3E1 and TIF3H1. Expressed in inflorescences, leaves, stems, siliques, roots and seedlings. Accumulates at highly levels in pollen grains, developing embryos and root tips.

The protein localises to the cytoplasm. Its function is as follows. Component of the eukaryotic translation initiation factor 3 (eIF-3) complex, which is involved in protein synthesis of a specialized repertoire of mRNAs and, together with other initiation factors, stimulates binding of mRNA and methionyl-tRNAi to the 40S ribosome. The eIF-3 complex specifically targets and initiates translation of a subset of mRNAs involved in cell proliferation (Potential). Involved in cell growth and differentiation, especially during embryogenesis and male gametophyte germination. Regulates sensitivity to sugars (e.g. sucrose). The chain is Eukaryotic translation initiation factor 3 subunit F (TIF3F1) from Arabidopsis thaliana (Mouse-ear cress).